Reading from the N-terminus, the 324-residue chain is Quinolinate synthase (324 aa).

Histidine 39 and serine 56 together coordinate iminosuccinate. Cysteine 101 lines the [4Fe-4S] cluster pocket. Iminosuccinate-binding positions include 127-129 (YIN) and serine 144. Cysteine 187 provides a ligand contact to [4Fe-4S] cluster. Residues 213–215 (HPE) and threonine 230 contribute to the iminosuccinate site. Position 280 (cysteine 280) interacts with [4Fe-4S] cluster.

This sequence belongs to the quinolinate synthase family. Type 2 subfamily. The cofactor is [4Fe-4S] cluster.

The protein localises to the cytoplasm. The catalysed reaction is iminosuccinate + dihydroxyacetone phosphate = quinolinate + phosphate + 2 H2O + H(+). It functions in the pathway cofactor biosynthesis; NAD(+) biosynthesis; quinolinate from iminoaspartate: step 1/1. Its function is as follows. Catalyzes the condensation of iminoaspartate with dihydroxyacetone phosphate to form quinolinate. This chain is Quinolinate synthase, found in Nostoc sp. (strain PCC 7120 / SAG 25.82 / UTEX 2576).